The sequence spans 123 residues: PTS-dependent dihydroxyacetone kinase, phosphotransferase subunit DhaM (123 aa).

In terms of domain architecture, PTS EIIA type-4 spans 2-123; that stretch reads TYGIVIVSHS…EQLEKMLIEK (122 aa). Histidine 10 serves as the catalytic Tele-phosphohistidine intermediate; for EIIA activity.

In terms of assembly, homodimer. The dihydroxyacetone kinase complex is composed of a homodimer of DhaM, a homodimer of DhaK and the subunit DhaL.

The catalysed reaction is dihydroxyacetone + phosphoenolpyruvate = dihydroxyacetone phosphate + pyruvate. The protein operates within polyol metabolism; glycerol degradation. Functionally, component of the dihydroxyacetone kinase complex, which is responsible for the phosphoenolpyruvate (PEP)-dependent phosphorylation of dihydroxyacetone. DhaM serves as the phosphoryl donor. Is phosphorylated by phosphoenolpyruvate in an EI- and HPr-dependent reaction, and a phosphorelay system on histidine residues finally leads to phosphoryl transfer to DhaL and dihydroxyacetone. This is PTS-dependent dihydroxyacetone kinase, phosphotransferase subunit DhaM from Lactococcus lactis subsp. lactis (strain IL1403) (Streptococcus lactis).